The chain runs to 217 residues: Probable GTP-binding protein EngB (217 aa).

An EngB-type G domain is found at 37 to 214; the sequence is AGVEVAFAGR…RAAMARLIGE (178 aa). GTP is bound by residues 45-52, 72-76, 92-95, 159-162, and 193-195; these read GRSNVGKS, GRTQE, DMPG, TKAD, and TSS. Mg(2+) is bound by residues Ser-52 and Thr-74.

Belongs to the TRAFAC class TrmE-Era-EngA-EngB-Septin-like GTPase superfamily. EngB GTPase family. Mg(2+) is required as a cofactor.

Necessary for normal cell division and for the maintenance of normal septation. The chain is Probable GTP-binding protein EngB from Nitrobacter hamburgensis (strain DSM 10229 / NCIMB 13809 / X14).